We begin with the raw amino-acid sequence, 32 residues long: Growth hormone-related protein 4 (32 aa).

A disulfide bond links Cys4 and Cys11.

This sequence belongs to the somatotropin/prolactin family. Glycosylated. Placental basal zone cells.

It is found in the secreted. The chain is Growth hormone-related protein 4 from Rattus norvegicus (Rat).